Reading from the N-terminus, the 132-residue chain is Antimicrobial protein Ace-AMP1 (132 aa).

Residues 1-27 (MVRVVSLLAASTFILLIMIISSPYANS) form the signal peptide. Cystine bridges form between Cys-31/Cys-76, Cys-41/Cys-54, Cys-55/Cys-100, and Cys-74/Cys-116.

It belongs to the plant LTP family. Highly divergent. In terms of assembly, monomer.

In terms of biological role, antifungal and antibacterial activity against the Gram-positive bacteria B.megaterium and S.lutea. The protein is Antimicrobial protein Ace-AMP1 of Allium cepa (Onion).